The primary structure comprises 244 residues: DNA repair protein RecO (244 aa).

Belongs to the RecO family.

Functionally, involved in DNA repair and RecF pathway recombination. This chain is DNA repair protein RecO, found in Ehrlichia chaffeensis (strain ATCC CRL-10679 / Arkansas).